The chain runs to 1377 residues: DNA-directed RNA polymerase subunit beta (1377 aa).

The protein belongs to the RNA polymerase beta chain family. The RNAP catalytic core consists of 2 alpha, 1 beta, 1 beta' and 1 omega subunit. When a sigma factor is associated with the core the holoenzyme is formed, which can initiate transcription.

The catalysed reaction is RNA(n) + a ribonucleoside 5'-triphosphate = RNA(n+1) + diphosphate. DNA-dependent RNA polymerase catalyzes the transcription of DNA into RNA using the four ribonucleoside triphosphates as substrates. This is DNA-directed RNA polymerase subunit beta from Orientia tsutsugamushi (strain Boryong) (Rickettsia tsutsugamushi).